A 400-amino-acid chain; its full sequence is MTTLGTPLSPSATRVMLLGSGELGKEVLIALQRLGVETIAVDRYENAPGQQVAHHARTITMSDPEQLKALIEAEKPTLVVPEIEAIATPMLQQLEDAGVVRVIPTARAARLTMDREGIRRLAAETLGVPTSPYKFCDSLAELQAAIDAGIGYPCIVKPVMSSSGKGQSKIDGPADVQKAWDYAMAGGRVSHGRVIVEGFIDFDYEITLLTVRAKDAAGAVQTRFCEPIGHVQVSGDYVESWQPHPMAPAALQKAQQIAEAVTSDLGGQGLFGVELFVKGDEVWFSEVSPRPHDTGMVTMATQWQNEFELHARAILGLPVDTSLKSPGASAVIYGGVDATGIAFDGVAEALRVPGSDIRLFGKPESFAKRRMGVALVHAADTGTARRLAKDAASRVKPRKA.

Residues 22-23 (EL) and Glu-82 each bind N(1)-(5-phospho-beta-D-ribosyl)glycinamide. Residues Arg-115, Lys-157, 162–167 (SSGKGQ), 197–200 (EGFI), and Glu-205 contribute to the ATP site. In terms of domain architecture, ATP-grasp spans 120–315 (RLAAETLGVP…EFELHARAIL (196 aa)). Positions 274 and 286 each coordinate Mg(2+). Residues Asp-293, Lys-362, and 369-370 (RR) each bind N(1)-(5-phospho-beta-D-ribosyl)glycinamide.

This sequence belongs to the PurK/PurT family. Homodimer.

The enzyme catalyses N(1)-(5-phospho-beta-D-ribosyl)glycinamide + formate + ATP = N(2)-formyl-N(1)-(5-phospho-beta-D-ribosyl)glycinamide + ADP + phosphate + H(+). Its pathway is purine metabolism; IMP biosynthesis via de novo pathway; N(2)-formyl-N(1)-(5-phospho-D-ribosyl)glycinamide from N(1)-(5-phospho-D-ribosyl)glycinamide (formate route): step 1/1. Functionally, involved in the de novo purine biosynthesis. Catalyzes the transfer of formate to 5-phospho-ribosyl-glycinamide (GAR), producing 5-phospho-ribosyl-N-formylglycinamide (FGAR). Formate is provided by PurU via hydrolysis of 10-formyl-tetrahydrofolate. This is Formate-dependent phosphoribosylglycinamide formyltransferase from Variovorax paradoxus (strain S110).